Reading from the N-terminus, the 470-residue chain is Argininosuccinate lyase (470 aa).

It belongs to the lyase 1 family. Argininosuccinate lyase subfamily.

The protein localises to the cytoplasm. The enzyme catalyses 2-(N(omega)-L-arginino)succinate = fumarate + L-arginine. The protein operates within amino-acid biosynthesis; L-arginine biosynthesis; L-arginine from L-ornithine and carbamoyl phosphate: step 3/3. This Mycolicibacterium gilvum (strain PYR-GCK) (Mycobacterium gilvum (strain PYR-GCK)) protein is Argininosuccinate lyase.